The primary structure comprises 443 residues: MLHPFQSVLLNRDGSLLFCVVKNEIKAFKVEGNGYVLRGEWVDDLDNTPLIKEKVLKEQARQLIENASKKLKTNDGEPVAQPKKQAKVPKPGPGAPPVYQYIRNLALSRDGKLLLACTDSDKAAVIFNIDLDDKDNIFKLIKRQPYPKRPNAITTSVDDKDLILADKFGDVYSMPIQNDVITSINAEKAPILGHVSMLTDVNMLTDSEGKQYIVTADRDEHIRISHYPQSFIVDKWLFGHEEFVSTICIPEWSDKLLFSAGGDKFVFSWNWKTGALLFKFDYTDLIQKYLTSDHLAPERFQNEKGDVIEYSVAKIVTLKDVPYIAFFVEATKVLFVLKVDEKSGALSLHQTLEFDEKIVSLTSALDVNTLCISLDNRDNQDCDLVKLLLLEGDVFIEQKDTNSQLMNTIRSTLKSDLIANVEAGDVYPLYHNASLRKHGEHFS.

The disordered stretch occupies residues 67-93; sequence ASKKLKTNDGEPVAQPKKQAKVPKPGP. WD repeat units follow at residues 97 to 137, 193 to 235, and 239 to 279; these read PVYQ…KDNI, GHVS…IVDK, and GHEE…LLFK.

The protein belongs to the WD repeat TRM82 family. Forms a heterodimer with the catalytic subunit TRM8.

It is found in the nucleus. Its pathway is tRNA modification; N(7)-methylguanine-tRNA biosynthesis. Required for the formation of N(7)-methylguanine at position 46 (m7G46) in tRNA. In the complex, it is required to stabilize and induce conformational changes of the catalytic subunit. The sequence is that of tRNA (guanine-N(7)-)-methyltransferase non-catalytic subunit TRM82 from Kluyveromyces lactis (strain ATCC 8585 / CBS 2359 / DSM 70799 / NBRC 1267 / NRRL Y-1140 / WM37) (Yeast).